Consider the following 856-residue polypeptide: Probable alpha,alpha-trehalose-phosphate synthase [UDP-forming] 8 (856 aa).

Ser5 bears the Phosphoserine mark. Thr32 is modified (phosphothreonine). Positions 57–541 (ERKIIVANML…AKSFMQDLER (485 aa)) are glycosyltransferase.

In the N-terminal section; belongs to the glycosyltransferase 20 family. It in the C-terminal section; belongs to the trehalose phosphatase family. In terms of tissue distribution, expressed in leaves, roots, stems and flowers.

The enzyme catalyses D-glucose 6-phosphate + UDP-alpha-D-glucose = alpha,alpha-trehalose 6-phosphate + UDP + H(+). In Arabidopsis thaliana (Mouse-ear cress), this protein is Probable alpha,alpha-trehalose-phosphate synthase [UDP-forming] 8 (TPS8).